We begin with the raw amino-acid sequence, 364 residues long: Cobalt-precorrin-5B C(1)-methyltransferase (364 aa).

Belongs to the CbiD family.

It carries out the reaction Co-precorrin-5B + S-adenosyl-L-methionine = Co-precorrin-6A + S-adenosyl-L-homocysteine. It functions in the pathway cofactor biosynthesis; adenosylcobalamin biosynthesis; cob(II)yrinate a,c-diamide from sirohydrochlorin (anaerobic route): step 6/10. Functionally, catalyzes the methylation of C-1 in cobalt-precorrin-5B to form cobalt-precorrin-6A. The chain is Cobalt-precorrin-5B C(1)-methyltransferase from Pseudomonas putida (strain W619).